We begin with the raw amino-acid sequence, 955 residues long: Aminopeptidase A (955 aa).

The Cytoplasmic segment spans residues 1–17; it reads MDIEDKSSKMHCMKGKH. The chain crosses the membrane as a helical; Signal-anchor for type II membrane protein span at residues 18-38; it reads VAIICGVVIAVGLILGLGLGL. The Extracellular segment spans residues 39–955; the sequence is GLKPEACNPP…LENSEQPNFV (917 aa). The interval 49–69 is disordered; the sequence is EDNGLLSTKPPTTSTPNVTNP. Residues 55 to 69 are compositionally biased toward low complexity; that stretch reads STKPPTTSTPNVTNP. N-linked (GlcNAc...) asparagine glycosylation is found at asparagine 65, asparagine 118, and asparagine 192. Position 218 (glutamate 218) interacts with substrate. Asparagine 312, asparagine 319, and asparagine 335 each carry an N-linked (GlcNAc...) asparagine glycan. 352–356 serves as a coordination point for substrate; that stretch reads GAMEN. Residue histidine 388 coordinates Zn(2+). The Proton acceptor role is filled by glutamate 389. Residues histidine 392 and glutamate 411 each coordinate Zn(2+). N-linked (GlcNAc...) asparagine glycans are attached at residues asparagine 458, asparagine 547, asparagine 584, asparagine 592, asparagine 647, asparagine 674, asparagine 681, asparagine 759, asparagine 766, asparagine 823, and asparagine 836. Arginine 882 serves as a coordination point for substrate.

It belongs to the peptidase M1 family. Homodimer; disulfide-linked. It depends on Zn(2+) as a cofactor.

Its subcellular location is the cell membrane. The enzyme catalyses Release of N-terminal glutamate (and to a lesser extent aspartate) from a peptide.. With respect to regulation, the partially purified protein is inhibited by the aminopeptidase competitive inhibitors amastatin (Leu and acidic inhibitor), and bestatin (Leu inhibitor), by chelating agents EDTA, and 1,10-Phenanthroline, as well as by Zn(2+) ions. Substrate specificity is modulated by Ca(2+), Ba(2+), and Mn(2+) ions which enhances the enzymatic activity for cleavage of acidic residues. Its function is as follows. Venom protein that cleaves N-terminal acidic residues from peptides with high potency in presence of calcium. It may have several roles in venom including alteration of blood pressure by cleaving circulating angiotensin-2, general degradation of host tissue, increase of permeability to other venom components, and/or processing of other toxins in the venom. In Gloydius brevicauda (Korean slamosa snake), this protein is Aminopeptidase A.